We begin with the raw amino-acid sequence, 485 residues long: Protein adenylyltransferase Fic (485 aa).

A helical membrane pass occupies residues Y21 to S43. 2 TPR repeats span residues A107–H140 and P141–N175. The Inhibitory (S/T)XXXE(G/N) motif motif lies at S232–G237. Residues E236 and V317–H320 each bind ATP. The Fido domain maps to I286 to D421. Residue H364 is part of the active site. ATP-binding positions include D368 to R375, Y400 to Y401, and N408.

Belongs to the fic family. In terms of assembly, homodimer.

It localises to the membrane. It carries out the reaction L-tyrosyl-[protein] + ATP = O-(5'-adenylyl)-L-tyrosyl-[protein] + diphosphate. The enzyme catalyses L-threonyl-[protein] + ATP = 3-O-(5'-adenylyl)-L-threonyl-[protein] + diphosphate. The catalysed reaction is 3-O-(5'-adenylyl)-L-threonyl-[protein] + H2O = L-threonyl-[protein] + AMP + H(+). The side chain of Glu-236 determines which of the two opposing activities (AMPylase or de-AMPylase) will take place. In response to endoplasmic reticulum stress, mediates de-AMPylase activity. Adenylyltransferase activity is inhibited by the inhibitory helix present at the N-terminus: Glu-236 binds ATP and competes with ATP-binding at Arg-375, thereby preventing adenylyltransferase activity. In unstressed cells, disengagement of Glu-236 promotes adenylyltransferase activity. Activation dissociates ATP-binding from Glu-236, allowing ordered binding of the entire ATP moiety with the alpha-phosphate in an orientation that is productive for accepting an incoming target hydroxyl side chain. In terms of biological role, protein that can both mediate the addition of adenosine 5'-monophosphate (AMP) to specific residues of target proteins (AMPylation), and the removal of the same modification from target proteins (de-AMPylation), depending on the context. The side chain of Glu-236 determines which of the two opposing activities (AMPylase or de-AMPylase) will take place. Acts as a key regulator of the unfolded protein response (UPR) by mediating AMPylation or de-AMPylation of Hsc70-3/BiP. In unstressed cells, acts as an adenylyltransferase by mediating AMPylation of Hsc70-3/BiP at 'Thr-518', thereby inactivating it. In response to endoplasmic reticulum stress, acts as a phosphodiesterase by mediating removal of ATP (de-AMPylation) from Hsc70-3/BiP at 'Thr-518', leading to restore HSPA5/BiP activity. This is Protein adenylyltransferase Fic from Drosophila virilis (Fruit fly).